Reading from the N-terminus, the 84-residue chain is U21-theraphotoxin-Cg1a 2 (84 aa).

Positions methionine 1–alanine 21 are cleaved as a signal peptide. The propeptide occupies glutamate 22–arginine 47. Cystine bridges form between cysteine 49–cysteine 63, cysteine 56–cysteine 68, and cysteine 62–cysteine 76. Valine 82 is subject to Valine amide.

This sequence belongs to the neurotoxin 10 (Hwtx-1) family. 05 (F4a) subfamily. As to expression, expressed by the venom gland.

It localises to the secreted. Its function is as follows. Probable ion channel inhibitor. The polypeptide is U21-theraphotoxin-Cg1a 2 (Chilobrachys guangxiensis (Chinese earth tiger tarantula)).